We begin with the raw amino-acid sequence, 222 residues long: Transcriptional regulatory protein BasR (222 aa).

The 115-residue stretch at 2-116 (KILIVEDDTL…ELHARIRALL (115 aa)) folds into the Response regulatory domain. D51 is subject to 4-aspartylphosphate. The segment at residues 124–218 (ESELIVGNLT…VRGFGYMLVA (95 aa)) is a DNA-binding region (ompR/PhoB-type).

In terms of assembly, homodimer. Phosphorylated by BasS.

It is found in the cytoplasm. Member of the two-component regulatory system BasS/BasR. BasR induces the transcription of the ugd, ais, arnBCADTEF and eptA-basRS loci, all involved in resistance to polymyxin. The protein is Transcriptional regulatory protein BasR (basR) of Escherichia coli (strain K12).